Reading from the N-terminus, the 151-residue chain is uncharacterized protein (151 aa).

3 helical membrane-spanning segments follow: residues 14-34, 45-65, and 91-111; these read GAAL…YWLI, ISLV…GYLI, and VIVA…ASLI.

Its subcellular location is the cell membrane. This is an uncharacterized protein from Bacillus subtilis (strain 168).